A 109-amino-acid chain; its full sequence is Thiosulfate sulfurtransferase GlpE (109 aa).

The 89-residue stretch at Ala17–Ala105 folds into the Rhodanese domain. The active-site Cysteine persulfide intermediate is the Cys65.

It belongs to the GlpE family.

The protein localises to the cytoplasm. The catalysed reaction is thiosulfate + hydrogen cyanide = thiocyanate + sulfite + 2 H(+). The enzyme catalyses thiosulfate + [thioredoxin]-dithiol = [thioredoxin]-disulfide + hydrogen sulfide + sulfite + 2 H(+). Its function is as follows. Transferase that catalyzes the transfer of sulfur from thiosulfate to thiophilic acceptors such as cyanide or dithiols. May function in a CysM-independent thiosulfate assimilation pathway by catalyzing the conversion of thiosulfate to sulfite, which can then be used for L-cysteine biosynthesis. The polypeptide is Thiosulfate sulfurtransferase GlpE (Edwardsiella ictaluri (strain 93-146)).